The following is a 108-amino-acid chain: Integration host factor subunit alpha (108 aa).

This sequence belongs to the bacterial histone-like protein family. As to quaternary structure, heterodimer of an alpha and a beta chain.

In terms of biological role, this protein is one of the two subunits of integration host factor, a specific DNA-binding protein that functions in genetic recombination as well as in transcriptional and translational control. This is Integration host factor subunit alpha from Methylorubrum populi (strain ATCC BAA-705 / NCIMB 13946 / BJ001) (Methylobacterium populi).